Reading from the N-terminus, the 296-residue chain is Nucleotide-binding protein str0831 (296 aa).

Residue 13 to 20 (GMSGAGKT) participates in ATP binding. Position 63–66 (63–66 (DMRS)) interacts with GTP.

Belongs to the RapZ-like family.

Displays ATPase and GTPase activities. The chain is Nucleotide-binding protein str0831 from Streptococcus thermophilus (strain CNRZ 1066).